The following is a 728-amino-acid chain: 1,4-alpha-glucan branching enzyme GlgB (728 aa).

The active-site Nucleophile is D405. Residue E458 is the Proton donor of the active site.

This sequence belongs to the glycosyl hydrolase 13 family. GlgB subfamily. In terms of assembly, monomer.

It carries out the reaction Transfers a segment of a (1-&gt;4)-alpha-D-glucan chain to a primary hydroxy group in a similar glucan chain.. Its pathway is glycan biosynthesis; glycogen biosynthesis. Catalyzes the formation of the alpha-1,6-glucosidic linkages in glycogen by scission of a 1,4-alpha-linked oligosaccharide from growing alpha-1,4-glucan chains and the subsequent attachment of the oligosaccharide to the alpha-1,6 position. The sequence is that of 1,4-alpha-glucan branching enzyme GlgB from Salmonella typhi.